Reading from the N-terminus, the 140-residue chain is L-fucose mutarotase (140 aa).

The active-site Proton donor is the His22. Substrate contacts are provided by residues Asp30, Arg107, and 129–131 (YGN).

It belongs to the RbsD / FucU family. FucU mutarotase subfamily. As to quaternary structure, homodecamer.

Its subcellular location is the cytoplasm. The catalysed reaction is alpha-L-fucose = beta-L-fucose. It functions in the pathway carbohydrate metabolism; L-fucose metabolism. Functionally, involved in the anomeric conversion of L-fucose. This Shigella boydii serotype 18 (strain CDC 3083-94 / BS512) protein is L-fucose mutarotase.